We begin with the raw amino-acid sequence, 876 residues long: Valine--tRNA ligase (876 aa).

Residues 43 to 53 (PNVTGVLHMGH) carry the 'HIGH' region motif. The 'KMSKS' region motif lies at 534 to 538 (KMSKS). Lysine 537 serves as a coordination point for ATP. Residues 847-876 (PEKVVAIEKAKKADAEAKIEALKASLKSLS) are a coiled coil.

It belongs to the class-I aminoacyl-tRNA synthetase family. ValS type 1 subfamily. As to quaternary structure, monomer.

Its subcellular location is the cytoplasm. It catalyses the reaction tRNA(Val) + L-valine + ATP = L-valyl-tRNA(Val) + AMP + diphosphate. In terms of biological role, catalyzes the attachment of valine to tRNA(Val). As ValRS can inadvertently accommodate and process structurally similar amino acids such as threonine, to avoid such errors, it has a 'posttransfer' editing activity that hydrolyzes mischarged Thr-tRNA(Val) in a tRNA-dependent manner. The polypeptide is Valine--tRNA ligase (Christiangramia forsetii (strain DSM 17595 / CGMCC 1.15422 / KT0803) (Gramella forsetii)).